Reading from the N-terminus, the 460-residue chain is Methylenetetrahydrofolate--tRNA-(uracil-5-)-methyltransferase TrmFO (460 aa).

12-17 (GGGLAG) contributes to the FAD binding site.

The protein belongs to the MnmG family. TrmFO subfamily. Requires FAD as cofactor.

The protein resides in the cytoplasm. The catalysed reaction is uridine(54) in tRNA + (6R)-5,10-methylene-5,6,7,8-tetrahydrofolate + NADH + H(+) = 5-methyluridine(54) in tRNA + (6S)-5,6,7,8-tetrahydrofolate + NAD(+). It carries out the reaction uridine(54) in tRNA + (6R)-5,10-methylene-5,6,7,8-tetrahydrofolate + NADPH + H(+) = 5-methyluridine(54) in tRNA + (6S)-5,6,7,8-tetrahydrofolate + NADP(+). Catalyzes the folate-dependent formation of 5-methyl-uridine at position 54 (M-5-U54) in all tRNAs. In Crocosphaera subtropica (strain ATCC 51142 / BH68) (Cyanothece sp. (strain ATCC 51142)), this protein is Methylenetetrahydrofolate--tRNA-(uracil-5-)-methyltransferase TrmFO.